Here is a 131-residue protein sequence, read N- to C-terminus: Small ribosomal subunit protein uS11 (131 aa).

The protein belongs to the universal ribosomal protein uS11 family. As to quaternary structure, part of the 30S ribosomal subunit. Interacts with proteins S7 and S18. Binds to IF-3.

Its function is as follows. Located on the platform of the 30S subunit, it bridges several disparate RNA helices of the 16S rRNA. Forms part of the Shine-Dalgarno cleft in the 70S ribosome. This Pelobacter propionicus (strain DSM 2379 / NBRC 103807 / OttBd1) protein is Small ribosomal subunit protein uS11.